A 90-amino-acid polypeptide reads, in one-letter code: Small ribosomal subunit protein bS16 (90 aa).

Belongs to the bacterial ribosomal protein bS16 family.

The sequence is that of Small ribosomal subunit protein bS16 from Brevibacillus brevis (strain 47 / JCM 6285 / NBRC 100599).